Consider the following 780-residue polypeptide: Molybdenum cofactor sulfurase (780 aa).

Residue Lys246 is modified to N6-(pyridoxal phosphate)lysine. Cys413 is a catalytic residue. An MOSC domain is found at 635–780; the sequence is LRLLRQSGQR…MTCGDVVLVE (146 aa). Ser734 is modified (phosphoserine).

This sequence belongs to the class-V pyridoxal-phosphate-dependent aminotransferase family. MOCOS subfamily. Requires pyridoxal 5'-phosphate as cofactor.

It carries out the reaction Mo-molybdopterin + L-cysteine + AH2 = thio-Mo-molybdopterin + L-alanine + A + H2O. Its function is as follows. Sulfurates the molybdenum cofactor. Sulfation of molybdenum is essential for xanthine dehydrogenase (XDH) and aldehyde oxidase (ADO) enzymes in which molybdenum cofactor is liganded by 1 oxygen and 1 sulfur atom in active form. The protein is Molybdenum cofactor sulfurase of Drosophila yakuba (Fruit fly).